The following is a 166-amino-acid chain: Ribosome maturation factor RimP (166 aa).

It belongs to the RimP family.

It localises to the cytoplasm. Functionally, required for maturation of 30S ribosomal subunits. This Psychrobacter sp. (strain PRwf-1) protein is Ribosome maturation factor RimP.